Consider the following 131-residue polypeptide: Neo-calmodulin (131 aa).

EF-hand domains lie at Glu1–Asn32, Pro33–Asp68, Asp70–Lys105, and Leu106–Phe131. Residues Asp10, Asp12, Asp14, Thr16, Glu21, Asp46, Asp48, Asn50, Thr52, Glu57, Asp83, Asp85, Asn87, Tyr89, Glu94, Asp119, Asp121, Asp123, Gln125, and Glu130 each coordinate Ca(2+).

The protein belongs to the calmodulin family.

The polypeptide is Neo-calmodulin (Gallus gallus (Chicken)).